A 239-amino-acid chain; its full sequence is Ribosomal RNA small subunit methyltransferase G (239 aa).

Residues G77, F82, 128 to 129, and R146 each bind S-adenosyl-L-methionine; that span reads AE. A disordered region spans residues 215-239; that stretch reads DKKRQTPKKYPRKPGTPNKTPLLEK.

This sequence belongs to the methyltransferase superfamily. RNA methyltransferase RsmG family.

Its subcellular location is the cytoplasm. In terms of biological role, specifically methylates the N7 position of guanine in position 535 of 16S rRNA. The chain is Ribosomal RNA small subunit methyltransferase G from Staphylococcus aureus (strain bovine RF122 / ET3-1).